The following is a 182-amino-acid chain: Ribosome-recycling factor (182 aa).

This sequence belongs to the RRF family.

The protein localises to the cytoplasm. Its function is as follows. Responsible for the release of ribosomes from messenger RNA at the termination of protein biosynthesis. May increase the efficiency of translation by recycling ribosomes from one round of translation to another. The polypeptide is Ribosome-recycling factor (Prochlorococcus marinus (strain SARG / CCMP1375 / SS120)).